A 174-amino-acid polypeptide reads, in one-letter code: Chorismate pyruvate-lyase (174 aa).

Positions 36, 78, 116, and 157 each coordinate substrate.

It belongs to the UbiC family. In terms of assembly, monomer.

Its subcellular location is the cytoplasm. It carries out the reaction chorismate = 4-hydroxybenzoate + pyruvate. It participates in cofactor biosynthesis; ubiquinone biosynthesis. Removes the pyruvyl group from chorismate, with concomitant aromatization of the ring, to provide 4-hydroxybenzoate (4HB) for the ubiquinone pathway. The chain is Chorismate pyruvate-lyase from Serratia proteamaculans (strain 568).